A 242-amino-acid polypeptide reads, in one-letter code: Ribonuclease PH (242 aa).

Residues R89 and 127–129 (GTR) contribute to the phosphate site.

It belongs to the RNase PH family. Homohexameric ring arranged as a trimer of dimers.

The catalysed reaction is tRNA(n+1) + phosphate = tRNA(n) + a ribonucleoside 5'-diphosphate. Phosphorolytic 3'-5' exoribonuclease that plays an important role in tRNA 3'-end maturation. Removes nucleotide residues following the 3'-CCA terminus of tRNAs; can also add nucleotides to the ends of RNA molecules by using nucleoside diphosphates as substrates, but this may not be physiologically important. Probably plays a role in initiation of 16S rRNA degradation (leading to ribosome degradation) during starvation. The protein is Ribonuclease PH of Neisseria meningitidis serogroup A / serotype 4A (strain DSM 15465 / Z2491).